The sequence spans 342 residues: Heat-inducible transcription repressor HrcA (342 aa).

The protein belongs to the HrcA family.

Its function is as follows. Negative regulator of class I heat shock genes (grpE-dnaK-dnaJ and groELS operons). Prevents heat-shock induction of these operons. This is Heat-inducible transcription repressor HrcA from Methylibium petroleiphilum (strain ATCC BAA-1232 / LMG 22953 / PM1).